Consider the following 134-residue polypeptide: 16 kDa beta-galactoside-binding lectin (134 aa).

An N-acetylmethionine modification is found at Met1. One can recognise a Galectin domain in the interval 4–134 (GLVVTQLDVQ…DFKVKAIKFS (131 aa)). Position 69 to 75 (69 to 75 (WGEEDRK)) interacts with a beta-D-galactoside.

In terms of assembly, homodimer. Mainly in the liver (adult), mainly in the muscle (embryo).

This protein binds beta-galactoside. Its physiological function is not yet known. It may be involved in the regulation of differentiation. The chain is 16 kDa beta-galactoside-binding lectin from Gallus gallus (Chicken).